A 131-amino-acid chain; its full sequence is ATP synthase epsilon chain, chloroplastic (131 aa).

Belongs to the ATPase epsilon chain family. In terms of assembly, F-type ATPases have 2 components, CF(1) - the catalytic core - and CF(0) - the membrane proton channel. CF(1) has five subunits: alpha(3), beta(3), gamma(1), delta(1), epsilon(1). CF(0) has three main subunits: a, b and c.

It is found in the plastid. It localises to the chloroplast thylakoid membrane. In terms of biological role, produces ATP from ADP in the presence of a proton gradient across the membrane. This Cyanidioschyzon merolae (strain NIES-3377 / 10D) (Unicellular red alga) protein is ATP synthase epsilon chain, chloroplastic.